A 234-amino-acid chain; its full sequence is Orotidine 5'-phosphate decarboxylase (234 aa).

Substrate is bound by residues Asp-14, Lys-36, 63–72 (DLKFHDIPNT), Thr-123, Arg-184, Gln-193, Gly-213, and Arg-214. The active-site Proton donor is the Lys-65.

It belongs to the OMP decarboxylase family. Type 1 subfamily. As to quaternary structure, homodimer.

The enzyme catalyses orotidine 5'-phosphate + H(+) = UMP + CO2. It participates in pyrimidine metabolism; UMP biosynthesis via de novo pathway; UMP from orotate: step 2/2. In terms of biological role, catalyzes the decarboxylation of orotidine 5'-monophosphate (OMP) to uridine 5'-monophosphate (UMP). The protein is Orotidine 5'-phosphate decarboxylase of Pseudoalteromonas translucida (strain TAC 125).